The primary structure comprises 440 residues: Chromosome partition protein MukF (440 aa).

Positions 208-236 (LSETSGTLRELQDTLEAAGDKLQANLLRI) are leucine-zipper.

Belongs to the MukF family. Interacts, and probably forms a ternary complex, with MukE and MukB via its C-terminal region. The complex formation is stimulated by calcium or magnesium. It is required for an interaction between MukE and MukB.

The protein resides in the cytoplasm. Its subcellular location is the nucleoid. Functionally, involved in chromosome condensation, segregation and cell cycle progression. May participate in facilitating chromosome segregation by condensation DNA from both sides of a centrally located replisome during cell division. Not required for mini-F plasmid partitioning. Probably acts via its interaction with MukB and MukE. Overexpression results in anucleate cells. It has a calcium binding activity. The polypeptide is Chromosome partition protein MukF (Yersinia enterocolitica serotype O:8 / biotype 1B (strain NCTC 13174 / 8081)).